Here is a 265-residue protein sequence, read N- to C-terminus: Undecaprenyl-diphosphatase (265 aa).

7 consecutive transmembrane segments (helical) span residues 38 to 58 (RSDF…CLAL), 75 to 95 (RDYV…GLIV), 108 to 128 (PVAW…HFAG), 135 to 155 (VVTW…GVFP), 181 to 201 (FVFM…LLEM), 215 to 235 (VAVA…WLLG), and 244 to 264 (VFAV…PAAA).

Belongs to the UppP family.

The protein localises to the cell inner membrane. It catalyses the reaction di-trans,octa-cis-undecaprenyl diphosphate + H2O = di-trans,octa-cis-undecaprenyl phosphate + phosphate + H(+). In terms of biological role, catalyzes the dephosphorylation of undecaprenyl diphosphate (UPP). Confers resistance to bacitracin. This Xanthomonas euvesicatoria pv. vesicatoria (strain 85-10) (Xanthomonas campestris pv. vesicatoria) protein is Undecaprenyl-diphosphatase.